Reading from the N-terminus, the 824-residue chain is Probable acyl-CoA dehydrogenase IBR3 (824 aa).

G2 carries the N-acetylglycine modification. Residues 555–565 (FAMTEPQVASS), 589–591 (WTS), R706, Q776, and 776–780 (QVHGA) each bind FAD. Positions 822–824 (SKL) match the Microbody targeting signal motif.

This sequence belongs to the acyl-CoA dehydrogenase family. FAD serves as cofactor.

Its subcellular location is the peroxisome. The catalysed reaction is a 2,3-saturated acyl-CoA + A = a 2,3-dehydroacyl-CoA + AH2. In terms of biological role, involved with IBR1 and IBR10 in the peroxisomal beta-oxidation of indole-3-butyric acid (IBA) to form indole-3-acetic acid (IAA), a biologically active auxin. May be responsible for catalyzing the first step in IBA-CoA beta-oxidation. May play a role in defense response to pathogenic bacteria. The sequence is that of Probable acyl-CoA dehydrogenase IBR3 from Arabidopsis thaliana (Mouse-ear cress).